We begin with the raw amino-acid sequence, 165 residues long: 6,7-dimethyl-8-ribityllumazine synthase (165 aa).

5-amino-6-(D-ribitylamino)uracil contacts are provided by residues Tyr30, 61 to 63 (ALE), and 90 to 92 (VVI). 95–96 (ET) is a binding site for (2S)-2-hydroxy-3-oxobutyl phosphate. Residue His98 is the Proton donor of the active site. Residue Asn123 participates in 5-amino-6-(D-ribitylamino)uracil binding. Arg137 contributes to the (2S)-2-hydroxy-3-oxobutyl phosphate binding site.

Belongs to the DMRL synthase family.

The catalysed reaction is (2S)-2-hydroxy-3-oxobutyl phosphate + 5-amino-6-(D-ribitylamino)uracil = 6,7-dimethyl-8-(1-D-ribityl)lumazine + phosphate + 2 H2O + H(+). The protein operates within cofactor biosynthesis; riboflavin biosynthesis; riboflavin from 2-hydroxy-3-oxobutyl phosphate and 5-amino-6-(D-ribitylamino)uracil: step 1/2. In terms of biological role, catalyzes the formation of 6,7-dimethyl-8-ribityllumazine by condensation of 5-amino-6-(D-ribitylamino)uracil with 3,4-dihydroxy-2-butanone 4-phosphate. This is the penultimate step in the biosynthesis of riboflavin. This chain is 6,7-dimethyl-8-ribityllumazine synthase, found in Xanthobacter autotrophicus (strain ATCC BAA-1158 / Py2).